Here is a 266-residue protein sequence, read N- to C-terminus: uncharacterized protein (266 aa).

A signal peptide spans 1–22 (MRYLKKLAWFISVIILGIFIIG). The N-palmitoyl cysteine moiety is linked to residue C23. The S-diacylglycerol cysteine moiety is linked to residue C23.

The protein belongs to the staphylococcal tandem lipoprotein family.

It is found in the cell membrane. This is an uncharacterized protein from Staphylococcus aureus (strain USA300).